Reading from the N-terminus, the 291-residue chain is Beta-lactamase CTX-M-14 (291 aa).

An N-terminal signal peptide occupies residues 1–28 (MVTKRVQRMMFAAAACIPLLLGSAPLYA). The active-site Nucleophile; acyl-ester intermediate is the Ser73. Residues Lys76, Ser133, Glu169, and Ser240 each contribute to the a beta-lactam site.

The protein belongs to the class-A beta-lactamase family. In terms of assembly, monomer.

It is found in the secreted. The enzyme catalyses a beta-lactam + H2O = a substituted beta-amino acid. Inhibited by the beta-lactamase-blocking agents clavulanic acid, tazobactam and sulbactam. Extended-spectrum beta-lactamase (ESBL) which confers resistance to penicillins, as well as first, second, and third-generation cephalosporins. Has cefotaxime-hydrolyzing activity. The sequence is that of Beta-lactamase CTX-M-14 from Escherichia coli.